Reading from the N-terminus, the 636-residue chain is Leucine-rich repeat and fibronectin type-III domain-containing protein 4 (636 aa).

An N-terminal signal peptide occupies residues 1–16 (MAPPLLLLLLASGAAA). In terms of domain architecture, LRRNT spans 17 to 48 (CPLPCVCQNLSESLSTLCAHRGLLFVPPNVDR). The Extracellular portion of the chain corresponds to 17–518 (CPLPCVCQNL…LQAHVLGGTL (502 aa)). Asn-25 is a glycosylation site (N-linked (GlcNAc...) asparagine). 7 LRR repeats span residues 49-70 (RTVELRLADNFIQALGPPDFRN), 73-94 (GLVDLTLSRNAITRIGARSFGD), 97-118 (SLRSLHLDGNRLVELGSSSLRG), 121-142 (NLQHLILSGNQLGRIAPGAFDD), 146-169 (SLEDLDVSYNNLRQVPWAGIGSMP), 170-191 (ALHTLNLDHNLIDALPPGVFAQ), and 194-215 (QLSRLDLTSNRLATLAPDPLFS). Residues 234 to 280 (NPLHCNCELLWLRRLARPDDLETCASPPTLAGRYFWAVPEGEFSCEP) form the LRRCT domain. The Ig-like domain occupies 281–367 (PLIARHTQRL…GEATARVELR (87 aa)). A disulfide bridge connects residues Cys-302 and Cys-351. Asn-333 carries an N-linked (GlcNAc...) asparagine glycan. The Fibronectin type-III domain occupies 405–502 (SEPAVQVTEV…GCAHFSTLPA (98 aa)). A helical transmembrane segment spans residues 519–539 (TVAVGGVLVAALLVFTVALLV). At 540–636 (RGRGAGNGRL…SAERLEESVV (97 aa)) the chain is on the cytoplasmic side. The interval 556–585 (VQSQTNGGTSPMPKSHPPRSPPPRPQRSCS) is disordered. Pro residues predominate over residues 569 to 580 (KSHPPRSPPPRP). Ser-585 and Ser-627 each carry phosphoserine. The PDZ-binding motif lies at 633 to 636 (ESVV).

It belongs to the LRFN family. Forms heteromeric complexes with LRFN1 and LRFN2. Can form heteromeric complexes with LRFN3 and LRFN5. Unable to form homophilic interactions across cell junctions. Interacts with DLG1, DLG2, DLG3 and DLG4. Glycosylated.

It is found in the membrane. Functionally, promotes neurite outgrowth in hippocampal neurons. May play a role in redistributing DLG4 to the cell periphery. In Rattus norvegicus (Rat), this protein is Leucine-rich repeat and fibronectin type-III domain-containing protein 4 (Lrfn4).